We begin with the raw amino-acid sequence, 307 residues long: Nucleotide-binding protein Achl_1824 (307 aa).

30-37 (GMSGAGRS) contacts ATP. GTP is bound at residue 81–84 (DVRS).

Belongs to the RapZ-like family.

Functionally, displays ATPase and GTPase activities. The protein is Nucleotide-binding protein Achl_1824 of Pseudarthrobacter chlorophenolicus (strain ATCC 700700 / DSM 12829 / CIP 107037 / JCM 12360 / KCTC 9906 / NCIMB 13794 / A6) (Arthrobacter chlorophenolicus).